Here is a 251-residue protein sequence, read N- to C-terminus: ATP synthase subunit a (251 aa).

A run of 5 helical transmembrane segments spans residues 14-34 (GFVK…LLAV), 78-98 (YLPF…FAVF), 107-127 (SLST…FYGI), 174-194 (MILA…MGVL), and 196-216 (LLIG…YIAA). Residues 224 to 251 (NAGASDDEGGEDAKSACAAGGKICKHKP) are disordered.

This sequence belongs to the ATPase A chain family. F-type ATPases have 2 components, CF(1) - the catalytic core - and CF(0) - the membrane proton channel. CF(1) has five subunits: alpha(3), beta(3), gamma(1), delta(1), epsilon(1). CF(0) has three main subunits: a(1), b(2) and c(9-12). The alpha and beta chains form an alternating ring which encloses part of the gamma chain. CF(1) is attached to CF(0) by a central stalk formed by the gamma and epsilon chains, while a peripheral stalk is formed by the delta and b chains.

The protein localises to the cell inner membrane. Functionally, key component of the proton channel; it plays a direct role in the translocation of protons across the membrane. This Nitrosospira multiformis (strain ATCC 25196 / NCIMB 11849 / C 71) protein is ATP synthase subunit a.